Here is a 305-residue protein sequence, read N- to C-terminus: Elongation factor Ts (305 aa).

The tract at residues 79–82 is involved in Mg(2+) ion dislocation from EF-Tu; it reads TDFV.

Belongs to the EF-Ts family.

The protein resides in the cytoplasm. Functionally, associates with the EF-Tu.GDP complex and induces the exchange of GDP to GTP. It remains bound to the aminoacyl-tRNA.EF-Tu.GTP complex up to the GTP hydrolysis stage on the ribosome. This is Elongation factor Ts from Brucella suis biovar 1 (strain 1330).